Here is a 398-residue protein sequence, read N- to C-terminus: 2,3,4,5-tetrahydropyridine-2,6-dicarboxylate N-succinyltransferase (398 aa).

E268 acts as the Acyl-anhydride intermediate in catalysis. Succinyl-CoA contacts are provided by residues R270, G285, S288, A311, 326–327 (DG), G334, K361, and 374–377 (RQNS).

The protein belongs to the type 2 tetrahydrodipicolinate N-succinyltransferase family. As to quaternary structure, homotrimer.

It is found in the cytoplasm. It carries out the reaction (S)-2,3,4,5-tetrahydrodipicolinate + succinyl-CoA + H2O = (S)-2-succinylamino-6-oxoheptanedioate + CoA. It functions in the pathway amino-acid biosynthesis; L-lysine biosynthesis via DAP pathway; LL-2,6-diaminopimelate from (S)-tetrahydrodipicolinate (succinylase route): step 1/3. Catalyzes the conversion of the cyclic tetrahydrodipicolinate (THDP) into the acyclic N-succinyl-L-2-amino-6-oxopimelate using succinyl-CoA. This is 2,3,4,5-tetrahydropyridine-2,6-dicarboxylate N-succinyltransferase from Sulfurimonas denitrificans (strain ATCC 33889 / DSM 1251) (Thiomicrospira denitrificans (strain ATCC 33889 / DSM 1251)).